Here is a 203-residue protein sequence, read N- to C-terminus: Large ribosomal subunit protein uL18 (203 aa).

This sequence belongs to the universal ribosomal protein uL18 family. In terms of assembly, part of the 50S ribosomal subunit. Contacts the 5S and 23S rRNAs.

In terms of biological role, this is one of the proteins that bind and probably mediate the attachment of the 5S RNA into the large ribosomal subunit, where it forms part of the central protuberance. The chain is Large ribosomal subunit protein uL18 from Pyrococcus furiosus (strain ATCC 43587 / DSM 3638 / JCM 8422 / Vc1).